Consider the following 311-residue polypeptide: Porphobilinogen deaminase (311 aa).

Cys242 is subject to S-(dipyrrolylmethanemethyl)cysteine.

This sequence belongs to the HMBS family. In terms of assembly, monomer. The cofactor is dipyrromethane.

The enzyme catalyses 4 porphobilinogen + H2O = hydroxymethylbilane + 4 NH4(+). The protein operates within porphyrin-containing compound metabolism; protoporphyrin-IX biosynthesis; coproporphyrinogen-III from 5-aminolevulinate: step 2/4. Its function is as follows. Tetrapolymerization of the monopyrrole PBG into the hydroxymethylbilane pre-uroporphyrinogen in several discrete steps. In Vibrio cholerae serotype O1 (strain ATCC 39315 / El Tor Inaba N16961), this protein is Porphobilinogen deaminase (hemC).